The primary structure comprises 211 residues: Methylamine utilization protein MauD (211 aa).

Residues 5–25 traverse the membrane as a helical segment; the sequence is ILIASNVLLWGAFLALAALML. The 138-residue stretch at 50-187 folds into the Thioredoxin domain; it reads PDVGERSPIF…LFETIREGHS (138 aa).

The protein localises to the membrane. Its pathway is one-carbon metabolism; methylamine degradation. In terms of biological role, may be specifically involved in the processing, transport, and/or maturation of the MADH beta-subunit. The chain is Methylamine utilization protein MauD (mauD) from Methylophilus methylotrophus (Bacterium W3A1).